The chain runs to 291 residues: 4-hydroxy-tetrahydrodipicolinate synthase (291 aa).

Threonine 44 lines the pyruvate pocket. Tyrosine 132 acts as the Proton donor/acceptor in catalysis. Residue lysine 160 is the Schiff-base intermediate with substrate of the active site. Isoleucine 202 lines the pyruvate pocket.

The protein belongs to the DapA family. As to quaternary structure, homotetramer; dimer of dimers.

It localises to the cytoplasm. The catalysed reaction is L-aspartate 4-semialdehyde + pyruvate = (2S,4S)-4-hydroxy-2,3,4,5-tetrahydrodipicolinate + H2O + H(+). It participates in amino-acid biosynthesis; L-lysine biosynthesis via DAP pathway; (S)-tetrahydrodipicolinate from L-aspartate: step 3/4. Its function is as follows. Catalyzes the condensation of (S)-aspartate-beta-semialdehyde [(S)-ASA] and pyruvate to 4-hydroxy-tetrahydrodipicolinate (HTPA). The polypeptide is 4-hydroxy-tetrahydrodipicolinate synthase (Syntrophobacter fumaroxidans (strain DSM 10017 / MPOB)).